A 146-amino-acid polypeptide reads, in one-letter code: D-aminoacyl-tRNA deacylase (146 aa).

A Gly-cisPro motif, important for rejection of L-amino acids motif is present at residues 137–138 (GP).

It belongs to the DTD family. As to quaternary structure, homodimer.

It is found in the cytoplasm. The catalysed reaction is glycyl-tRNA(Ala) + H2O = tRNA(Ala) + glycine + H(+). It catalyses the reaction a D-aminoacyl-tRNA + H2O = a tRNA + a D-alpha-amino acid + H(+). In terms of biological role, an aminoacyl-tRNA editing enzyme that deacylates mischarged D-aminoacyl-tRNAs. Also deacylates mischarged glycyl-tRNA(Ala), protecting cells against glycine mischarging by AlaRS. Acts via tRNA-based rather than protein-based catalysis; rejects L-amino acids rather than detecting D-amino acids in the active site. By recycling D-aminoacyl-tRNA to D-amino acids and free tRNA molecules, this enzyme counteracts the toxicity associated with the formation of D-aminoacyl-tRNA entities in vivo and helps enforce protein L-homochirality. The polypeptide is D-aminoacyl-tRNA deacylase (Hahella chejuensis (strain KCTC 2396)).